A 327-amino-acid chain; its full sequence is uncharacterized protein (327 aa).

A helical transmembrane segment spans residues 13–33 (IICIISIIVLLLIIISLYPHK).

It is found in the membrane. This is an uncharacterized protein from Caenorhabditis elegans.